Reading from the N-terminus, the 400-residue chain is Acetate kinase (400 aa).

Asn-7 contacts Mg(2+). An ATP-binding site is contributed by Lys-14. Position 91 (Arg-91) interacts with substrate. The active-site Proton donor/acceptor is Asp-148. ATP-binding positions include 208-212 (HVGNG), 283-285 (DMR), and 331-335 (GVGEN). Mg(2+) is bound at residue Glu-385.

It belongs to the acetokinase family. In terms of assembly, homodimer. Mg(2+) is required as a cofactor. It depends on Mn(2+) as a cofactor.

It is found in the cytoplasm. It catalyses the reaction acetate + ATP = acetyl phosphate + ADP. It participates in metabolic intermediate biosynthesis; acetyl-CoA biosynthesis; acetyl-CoA from acetate: step 1/2. Functionally, catalyzes the formation of acetyl phosphate from acetate and ATP. Can also catalyze the reverse reaction. This Parabacteroides distasonis (strain ATCC 8503 / DSM 20701 / CIP 104284 / JCM 5825 / NCTC 11152) protein is Acetate kinase.